A 468-amino-acid polypeptide reads, in one-letter code: Dihydrolipoyl dehydrogenase (468 aa).

Residues 39–47, Lys56, and Ala119 contribute to the FAD site; that span reads EKGNLGGVC. A disulfide bridge connects residues Cys47 and Cys52. Residues 183 to 187, Glu206, and 271 to 274 each bind NAD(+); these read GGGYI and TVGR. The FAD site is built by Asp314 and Ala322. The active-site Proton acceptor is the His446.

This sequence belongs to the class-I pyridine nucleotide-disulfide oxidoreductase family. Homodimer. FAD is required as a cofactor.

The protein resides in the cytoplasm. Its subcellular location is the membrane. The enzyme catalyses N(6)-[(R)-dihydrolipoyl]-L-lysyl-[protein] + NAD(+) = N(6)-[(R)-lipoyl]-L-lysyl-[protein] + NADH + H(+). Lipoamide dehydrogenase is a component of the alpha-ketoacid dehydrogenase complexes. This is Dihydrolipoyl dehydrogenase (pdhD) from Staphylococcus aureus (strain COL).